The chain runs to 149 residues: Calmodulin (149 aa).

Ala-2 carries the post-translational modification N-acetylalanine. 4 consecutive EF-hand domains span residues 8–43 (EQIA…LGQN), 44–79 (PTEA…KMKD), 81–116 (DTEE…LGEK), and 117–149 (LTDE…MMAK). Asp-21, Asp-23, Asp-25, Thr-27, Glu-32, Asp-57, Asp-59, Asn-61, Thr-63, Glu-68, Asp-94, Asp-96, Asn-98, and Glu-105 together coordinate Ca(2+). An N6,N6,N6-trimethyllysine modification is found at Lys-116. Residues Asp-130, Asp-132, Asp-134, His-136, and Glu-141 each contribute to the Ca(2+) site.

This sequence belongs to the calmodulin family.

Functionally, calmodulin mediates the control of a large number of enzymes, ion channels and other proteins by Ca(2+). Among the enzymes to be stimulated by the calmodulin-Ca(2+) complex are a number of protein kinases and phosphatases. The polypeptide is Calmodulin (Stylonychia lemnae (Ciliate)).